Consider the following 131-residue polypeptide: Large ribosomal subunit protein bL17 (131 aa).

It belongs to the bacterial ribosomal protein bL17 family. In terms of assembly, part of the 50S ribosomal subunit. Contacts protein L32.

The sequence is that of Large ribosomal subunit protein bL17 from Shewanella baltica (strain OS223).